The chain runs to 237 residues: MVEYNRIFCVLVIFSTTIKCEYSELMNQKIGVRVEVLNMIYENETTITSTGHPRCRLTLHKSGWDRDTCSSPQFKLNDTLSWSTRVCYKWVCDTTKYAMRVESCWIGSPNMSVYILRDDGCTIEKAILTSPVYTSFNRAAAIGWMAVRQKNMKYMHVGCTIRLCHLCDPKCQTITPPRTCNDNRADDYEAMWNSSSRVKNLCFPEPSTTENLNLNFGNSPFQNVGNIIILLLVFLLR.

The first 20 residues, 1–20, serve as a signal peptide directing secretion; it reads MVEYNRIFCVLVIFSTTIKC.

Interacts with vps-51 and vps-52. In terms of tissue distribution, expression detected in motor neurons.

It is found in the golgi apparatus. The protein resides in the trans-Golgi network. In Caenorhabditis elegans, this protein is Cuticlin-like protein 19 (cutl-19).